Here is a 541-residue protein sequence, read N- to C-terminus: Membrane protein insertase YidC (541 aa).

The next 6 helical transmembrane spans lie at 6–26 (NLLL…WESD), 326–346 (VVDY…LMFF), 349–369 (LVHN…GLLY), 420–440 (GGCL…WVLL), 457–477 (LSVQ…MWAM), and 500–520 (MIFT…WLVG).

It belongs to the OXA1/ALB3/YidC family. Type 1 subfamily. In terms of assembly, interacts with the Sec translocase complex via SecD. Specifically interacts with transmembrane segments of nascent integral membrane proteins during membrane integration.

It localises to the cell inner membrane. In terms of biological role, required for the insertion and/or proper folding and/or complex formation of integral membrane proteins into the membrane. Involved in integration of membrane proteins that insert both dependently and independently of the Sec translocase complex, as well as at least some lipoproteins. Aids folding of multispanning membrane proteins. The polypeptide is Membrane protein insertase YidC (Shewanella amazonensis (strain ATCC BAA-1098 / SB2B)).